A 115-amino-acid polypeptide reads, in one-letter code: NADH-ubiquinone oxidoreductase chain 3 (115 aa).

The next 3 helical transmembrane spans lie at leucine 3–tryptophan 23, phenylalanine 55–isoleucine 75, and leucine 87–leucine 107.

This sequence belongs to the complex I subunit 3 family. As to quaternary structure, core subunit of respiratory chain NADH dehydrogenase (Complex I) which is composed of 45 different subunits. Interacts with TMEM186. Interacts with TMEM242.

It localises to the mitochondrion inner membrane. It carries out the reaction a ubiquinone + NADH + 5 H(+)(in) = a ubiquinol + NAD(+) + 4 H(+)(out). In terms of biological role, core subunit of the mitochondrial membrane respiratory chain NADH dehydrogenase (Complex I) which catalyzes electron transfer from NADH through the respiratory chain, using ubiquinone as an electron acceptor. Essential for the catalytic activity of complex I. The protein is NADH-ubiquinone oxidoreductase chain 3 of Ornithorhynchus anatinus (Duckbill platypus).